A 298-amino-acid polypeptide reads, in one-letter code: Acetate permease A (298 aa).

The disordered stretch occupies residues 1–43; sequence MSAEQNHGLEKDVGGPAAPAAAAPNAPAAAPGAPPAGMSAEEH. A compositionally biased stretch (low complexity) spans 14–37; the sequence is GGPAAPAAAAPNAPAAAPGAPPAG. The next 6 membrane-spanning stretches (helical) occupy residues 86–106, 115–135, 146–166, 185–205, 210–230, and 245–265; these read APLG…INMG, IVIA…GMWE, ALSS…PGGF, SFGL…FCTL, AFFL…VGYI, and AGGF…LAGI.

Belongs to the acetate uptake transporter (AceTr) (TC 2.A.96) family.

It is found in the cell membrane. The protein localises to the vacuole membrane. Functionally, high affinity monocarboxylate transporter (MCT) involved in acetate uptake. Unlike other activities involved in acetate utilization, acpA is dispensable for growth on the acetate precursor ethanol. The chain is Acetate permease A from Emericella nidulans (strain FGSC A4 / ATCC 38163 / CBS 112.46 / NRRL 194 / M139) (Aspergillus nidulans).